The chain runs to 126 residues: Large ribosomal subunit protein bL12 (126 aa).

Belongs to the bacterial ribosomal protein bL12 family. As to quaternary structure, homodimer. Part of the ribosomal stalk of the 50S ribosomal subunit. Forms a multimeric L10(L12)X complex, where L10 forms an elongated spine to which 2 to 4 L12 dimers bind in a sequential fashion. Binds GTP-bound translation factors.

Its function is as follows. Forms part of the ribosomal stalk which helps the ribosome interact with GTP-bound translation factors. Is thus essential for accurate translation. The chain is Large ribosomal subunit protein bL12 from Citrifermentans bemidjiense (strain ATCC BAA-1014 / DSM 16622 / JCM 12645 / Bem) (Geobacter bemidjiensis).